The sequence spans 156 residues: ATP synthase subunit b (156 aa).

A helical transmembrane segment spans residues 7–29 (LLGQAISFALFVWFCMKYVWPPL).

This sequence belongs to the ATPase B chain family. In terms of assembly, F-type ATPases have 2 components, F(1) - the catalytic core - and F(0) - the membrane proton channel. F(1) has five subunits: alpha(3), beta(3), gamma(1), delta(1), epsilon(1). F(0) has three main subunits: a(1), b(2) and c(10-14). The alpha and beta chains form an alternating ring which encloses part of the gamma chain. F(1) is attached to F(0) by a central stalk formed by the gamma and epsilon chains, while a peripheral stalk is formed by the delta and b chains.

Its subcellular location is the cell inner membrane. Functionally, f(1)F(0) ATP synthase produces ATP from ADP in the presence of a proton or sodium gradient. F-type ATPases consist of two structural domains, F(1) containing the extramembraneous catalytic core and F(0) containing the membrane proton channel, linked together by a central stalk and a peripheral stalk. During catalysis, ATP synthesis in the catalytic domain of F(1) is coupled via a rotary mechanism of the central stalk subunits to proton translocation. Its function is as follows. Component of the F(0) channel, it forms part of the peripheral stalk, linking F(1) to F(0). The polypeptide is ATP synthase subunit b (Vibrio parahaemolyticus serotype O3:K6 (strain RIMD 2210633)).